Reading from the N-terminus, the 848-residue chain is Translation initiation factor IF-2 (848 aa).

The tract at residues 106–150 (TEQQTEAENSTNINLSEQTIKNNSHQSSSNTIETTQEKKQNDDLS) is disordered. The span at 112–139 (AENSTNINLSEQTIKNNSHQSSSNTIET) shows a compositional bias: polar residues. Residues 347–517 (PRAPIITVMG…LLLADMLELK (171 aa)) enclose the tr-type G domain. The G1 stretch occupies residues 356 to 363 (GHVDHGKT). Residue 356-363 (GHVDHGKT) coordinates GTP. The interval 381-385 (GITQH) is G2. The G3 stretch occupies residues 403 to 406 (DTPG). GTP-binding positions include 403–407 (DTPGH) and 457–460 (NKID). The segment at 457-460 (NKID) is G4. The interval 493–495 (SAL) is G5.

Belongs to the TRAFAC class translation factor GTPase superfamily. Classic translation factor GTPase family. IF-2 subfamily.

The protein resides in the cytoplasm. One of the essential components for the initiation of protein synthesis. Protects formylmethionyl-tRNA from spontaneous hydrolysis and promotes its binding to the 30S ribosomal subunits. Also involved in the hydrolysis of GTP during the formation of the 70S ribosomal complex. This chain is Translation initiation factor IF-2, found in Orientia tsutsugamushi (strain Boryong) (Rickettsia tsutsugamushi).